The following is a 139-amino-acid chain: Putative lipoprotein MIP_01412 (139 aa).

Positions 1-19 (MRNRTVAAGAVLTAALLGA) are cleaved as a signal peptide. Cys-20 is lipidated: N-palmitoyl cysteine. Cys-20 carries S-diacylglycerol cysteine lipidation.

The protein belongs to the mycobacterial 19 kDa antigen family.

It is found in the cell membrane. In Mycobacterium indicus pranii (strain DSM 45239 / MTCC 9506), this protein is Putative lipoprotein MIP_01412.